The following is a 254-amino-acid chain: Proteasome subunit alpha type-4 (254 aa).

At Thr-60 the chain carries Phosphothreonine. The disordered stretch occupies residues 235–254 (QIEQEKQEQQEQDKKKKSNH). The segment covering 237–248 (EQEKQEQQEQDK) has biased composition (basic and acidic residues).

This sequence belongs to the peptidase T1A family. As to quaternary structure, the 26S proteasome consists of a 20S proteasome core and two 19S regulatory subunits. The 20S proteasome core is composed of 28 subunits that are arranged in four stacked rings, resulting in a barrel-shaped structure. The two end rings are each formed by seven alpha subunits, and the two central rings are each formed by seven beta subunits. The catalytic chamber with the active sites is on the inside of the barrel. Interacts with CIC1.

It is found in the cytoplasm. The protein resides in the nucleus. The proteasome degrades poly-ubiquitinated proteins in the cytoplasm and in the nucleus. It is essential for the regulated turnover of proteins and for the removal of misfolded proteins. The proteasome is a multicatalytic proteinase complex that is characterized by its ability to cleave peptides with Arg, Phe, Tyr, Leu, and Glu adjacent to the leaving group at neutral or slightly basic pH. It has an ATP-dependent proteolytic activity. This chain is Proteasome subunit alpha type-4 (PRE6), found in Saccharomyces cerevisiae (strain ATCC 204508 / S288c) (Baker's yeast).